Consider the following 488-residue polypeptide: Protein nucleotidyltransferase YdiU (488 aa).

ATP contacts are provided by glycine 91, glycine 93, arginine 94, lysine 114, aspartate 126, glycine 127, arginine 177, and arginine 184. The active-site Proton acceptor is aspartate 253. 2 residues coordinate Mg(2+): asparagine 254 and aspartate 263. Aspartate 263 lines the ATP pocket.

The protein belongs to the SELO family. The cofactor is Mg(2+). Requires Mn(2+) as cofactor.

It catalyses the reaction L-seryl-[protein] + ATP = 3-O-(5'-adenylyl)-L-seryl-[protein] + diphosphate. It carries out the reaction L-threonyl-[protein] + ATP = 3-O-(5'-adenylyl)-L-threonyl-[protein] + diphosphate. The enzyme catalyses L-tyrosyl-[protein] + ATP = O-(5'-adenylyl)-L-tyrosyl-[protein] + diphosphate. The catalysed reaction is L-histidyl-[protein] + UTP = N(tele)-(5'-uridylyl)-L-histidyl-[protein] + diphosphate. It catalyses the reaction L-seryl-[protein] + UTP = O-(5'-uridylyl)-L-seryl-[protein] + diphosphate. It carries out the reaction L-tyrosyl-[protein] + UTP = O-(5'-uridylyl)-L-tyrosyl-[protein] + diphosphate. In terms of biological role, nucleotidyltransferase involved in the post-translational modification of proteins. It can catalyze the addition of adenosine monophosphate (AMP) or uridine monophosphate (UMP) to a protein, resulting in modifications known as AMPylation and UMPylation. This is Protein nucleotidyltransferase YdiU from Bacillus cereus (strain ZK / E33L).